The chain runs to 160 residues: MNLKILGIDPGSRNCGYAIIEADKGKNILIEAGLIKIKPSTLQYQITELCEGLDLIFKNHSFDEVAIEDIFFAYNPKTVLKLAQFRGALSLKILQIHGDFAEYTPLQVKKAVTGKAKATKEQVAFMVKRLLGLSKDIKPLDITDAIAVALTHAANLRVRV.

Residues aspartate 9, glutamate 68, and aspartate 141 contribute to the active site. Mg(2+) is bound by residues aspartate 9, glutamate 68, and aspartate 141.

This sequence belongs to the RuvC family. Homodimer which binds Holliday junction (HJ) DNA. The HJ becomes 2-fold symmetrical on binding to RuvC with unstacked arms; it has a different conformation from HJ DNA in complex with RuvA. In the full resolvosome a probable DNA-RuvA(4)-RuvB(12)-RuvC(2) complex forms which resolves the HJ. The cofactor is Mg(2+).

The protein resides in the cytoplasm. It carries out the reaction Endonucleolytic cleavage at a junction such as a reciprocal single-stranded crossover between two homologous DNA duplexes (Holliday junction).. The RuvA-RuvB-RuvC complex processes Holliday junction (HJ) DNA during genetic recombination and DNA repair. Endonuclease that resolves HJ intermediates. Cleaves cruciform DNA by making single-stranded nicks across the HJ at symmetrical positions within the homologous arms, yielding a 5'-phosphate and a 3'-hydroxyl group; requires a central core of homology in the junction. The consensus cleavage sequence is 5'-(A/T)TT(C/G)-3'. Cleavage occurs on the 3'-side of the TT dinucleotide at the point of strand exchange. HJ branch migration catalyzed by RuvA-RuvB allows RuvC to scan DNA until it finds its consensus sequence, where it cleaves and resolves the cruciform DNA. This is Crossover junction endodeoxyribonuclease RuvC from Campylobacter jejuni subsp. jejuni serotype O:2 (strain ATCC 700819 / NCTC 11168).